We begin with the raw amino-acid sequence, 109 residues long: Set1 complex component sdc1 (109 aa).

Residues Gln49–Ser109 form a disordered region. Positions Ser73–Asn87 are enriched in polar residues. The segment covering Pro88–Ser101 has biased composition (low complexity).

This sequence belongs to the dpy-30 family. In terms of assembly, component of the COMPASS (Set1C) complex composed of ash2, sdc1, set1, shg1, spp1, swd1, swd2 and swd3. Component of the Lid2 complex composed of ash2, jmj3, lid2, sdc1 and snt2.

Its subcellular location is the nucleus. In terms of biological role, the COMPASS (Set1C) complex specifically mono-, di- and trimethylates histone H3 to form H3K4me1/2/3, which subsequently activates gene expression by regulating transcription elongation and plays a role in telomere length maintenance. The polypeptide is Set1 complex component sdc1 (sdc1) (Schizosaccharomyces pombe (strain 972 / ATCC 24843) (Fission yeast)).